The chain runs to 425 residues: Putative dipeptidase MGYG_00085 (425 aa).

The N-terminal stretch at M1 to V31 is a signal peptide. Residues H56, D58, and E168 each coordinate Zn(2+). C107 and C197 are oxidised to a cystine. H195 is a binding site for substrate. 2 residues coordinate Zn(2+): H239 and H260. Residues R271 and D331 each coordinate substrate. N403 carries N-linked (GlcNAc...) asparagine glycosylation.

Belongs to the metallo-dependent hydrolases superfamily. Peptidase M19 family. Zn(2+) is required as a cofactor.

It catalyses the reaction an L-aminoacyl-L-amino acid + H2O = 2 an L-alpha-amino acid. Hydrolyzes a wide range of dipeptides. The polypeptide is Putative dipeptidase MGYG_00085 (Arthroderma gypseum (strain ATCC MYA-4604 / CBS 118893) (Microsporum gypseum)).